The sequence spans 218 residues: GILT-like protein ZK669.3 (218 aa).

Positions 1–21 (MRRLNGVFICLILFITKISYA) are cleaved as a signal peptide. N-linked (GlcNAc...) asparagine glycans are attached at residues asparagine 129 and asparagine 185.

This sequence belongs to the GILT family.

The protein localises to the secreted. In Caenorhabditis elegans, this protein is GILT-like protein ZK669.3.